Here is a 434-residue protein sequence, read N- to C-terminus: Histidinol dehydrogenase (434 aa).

Zn(2+) is bound by residues E260 and H263. Catalysis depends on proton acceptor residues E330 and H331. H423 is a binding site for Zn(2+).

The protein belongs to the histidinol dehydrogenase family. The cofactor is Zn(2+).

The catalysed reaction is L-histidinol + 2 NAD(+) + H2O = L-histidine + 2 NADH + 3 H(+). It functions in the pathway amino-acid biosynthesis; L-histidine biosynthesis; L-histidine from 5-phospho-alpha-D-ribose 1-diphosphate: step 9/9. Its function is as follows. Catalyzes the sequential NAD-dependent oxidations of L-histidinol to L-histidinaldehyde and then to L-histidine. This chain is Histidinol dehydrogenase (hisD), found in Synechocystis sp. (strain ATCC 27184 / PCC 6803 / Kazusa).